Here is a 295-residue protein sequence, read N- to C-terminus: Aquaporin-9 (295 aa).

The Cytoplasmic portion of the chain corresponds to 1-24 (MPSEKDGAKKSLMQRLALKSRIAK). A helical transmembrane segment spans residues 25–43 (ETLSEFLGTFIMIVLGCSS). The Extracellular segment spans residues 44–57 (IAQAVLSRERFGGI). A helical membrane pass occupies residues 58–77 (ITINIGFASAVVMALYVTFG). Residues 78 to 79 (IS) are Cytoplasmic-facing. The segment at residues 80 to 92 (GGHINPAVSFAMC) is an intramembrane region (discontinuously helical). Residues 84–86 (NPA) carry the NPA 1 motif. The Cytoplasmic portion of the chain corresponds to 93–98 (AFGRME). A helical transmembrane segment spans residues 99-123 (WFKFPFYVGAQFLGAFVGAATVFGI). Over 124–160 (YYDGLMAFAGGKLLVVGENATAFIFATYPAPFISTPG) the chain is Extracellular. Residues 161-178 (AFVDQVVSTMFLLLIVFA) form a helical membrane-spanning segment. Over 179–190 (MFDSRNLGVPRG) the chain is Cytoplasmic. The helical transmembrane segment at 191–207 (LEPVVIGLLIIVLSCSL) threads the bilayer. The Extracellular portion of the chain corresponds to 208–210 (GLN). The discontinuously helical intramembrane region spans 211–225 (SGCAMNPARDLSPRL). An NPA 2 motif is present at residues 216–218 (NPA). The Extracellular segment spans residues 226-243 (FTALAGWGFEVFTVGNNF). The helical transmembrane segment at 244-264 (WWIPVVGPMIGAFLGGLIYIL) threads the bilayer. Residues 265–295 (FIQMHHSKLDPDMKAEPSENNLEKHELSVIM) are Cytoplasmic-facing.

The protein belongs to the MIP/aquaporin (TC 1.A.8) family. As to quaternary structure, homotetramer; each monomer provides an independent glycerol/water pore. Detected in testis and liver. Detected in immature spermatocytes and in interstitial Leydig cells.

Its subcellular location is the cell membrane. It is found in the basolateral cell membrane. It carries out the reaction H2O(in) = H2O(out). The enzyme catalyses glycerol(in) = glycerol(out). It catalyses the reaction urea(in) = urea(out). The catalysed reaction is (S)-lactate(in) = (S)-lactate(out). It carries out the reaction NH4(+)(in) = NH4(+)(out). The enzyme catalyses uracil(in) = uracil(out). It catalyses the reaction adenine(out) = adenine(in). The catalysed reaction is 3-hydroxybutanoate(in) = 3-hydroxybutanoate(out). It carries out the reaction D-sorbitol(in) = D-sorbitol(out). The enzyme catalyses D-mannitol(in) = D-mannitol(out). It catalyses the reaction H2O2(out) = H2O2(in). The catalysed reaction is arsenite(in) = arsenite(out). It carries out the reaction selenite(in) = selenite(out). With respect to regulation, channel activity is inhibited by mercury ions and phloretin. Functionally, aquaglyceroporins form homotetrameric transmembrane channels, with each monomer independently mediating glycerol and water transport across the plasma membrane along their osmotic gradient. AQP9 is the primary route for glycerol uptake in hepatocytes, supporting hepatic gluconeogenesis. It exhibits broad specificity and may transport various small, non-charged solutes, including carbamides, polyols, purines, and pyrimidines. AQP9 may also facilitate hepatic urea extrusion. Due to its permeability to lactate, AQP9 might participate in the astrocyte-to-neuron lactate shuttle, supplying neurons with energy. Additionally, AQP9 is permeable to arsenite, contributing to arsenic excretion by the liver and providing partial protection against arsenic toxicity. It is also permeable to H2O2 in vivo. Could also be permeable to ammonium. This chain is Aquaporin-9, found in Rattus norvegicus (Rat).